The primary structure comprises 787 residues: Glycine-rich domain-containing protein 2 (787 aa).

Expressed in leaves, inflorescences, buds, flowers and immature siliques.

Functionally, involved in development and stress responses, probably through an auxin-dependent mechanism. In Arabidopsis thaliana (Mouse-ear cress), this protein is Glycine-rich domain-containing protein 2.